Reading from the N-terminus, the 519-residue chain is T-box transcription factor TBX5 (519 aa).

Positions 1–43 (MADTEEAYGMPDTPVEAEPKELQCEPKQDNQMGASSKTPTSPQ) are disordered. The segment covering 17–28 (AEPKELQCEPKQ) has biased composition (basic and acidic residues). The segment covering 29-43 (DNQMGASSKTPTSPQ) has biased composition (polar residues). Residues 63–238 (LWLKFHEVGT…NNPFAKGFRG (176 aa)) constitute a DNA-binding region (T-box). 2 disordered regions span residues 254–312 (EYPV…SAYP) and 335–376 (ELSY…TESA). Over residues 262 to 303 (TVRQKVSSNHSPFSQETRNITGSSTLNSQYQCENGVSSTSQD) the composition is skewed to polar residues.

As to quaternary structure, monomer. Homodimer (via the T-box); binds DNA as homodimer.

The protein localises to the nucleus. Its subcellular location is the cytoplasm. DNA-binding protein that regulates the transcription of several genes and is involved in heart development and limb pattern formation. May bind to the core DNA motif of promoters. In Xenopus tropicalis (Western clawed frog), this protein is T-box transcription factor TBX5 (tbx5).